Consider the following 250-residue polypeptide: 1-(5-phosphoribosyl)-5-[(5-phosphoribosylamino)methylideneamino] imidazole-4-carboxamide isomerase (250 aa).

The active-site Proton acceptor is the D10. The active-site Proton donor is the D131.

It belongs to the HisA/HisF family.

The protein resides in the cytoplasm. The enzyme catalyses 1-(5-phospho-beta-D-ribosyl)-5-[(5-phospho-beta-D-ribosylamino)methylideneamino]imidazole-4-carboxamide = 5-[(5-phospho-1-deoxy-D-ribulos-1-ylimino)methylamino]-1-(5-phospho-beta-D-ribosyl)imidazole-4-carboxamide. It participates in amino-acid biosynthesis; L-histidine biosynthesis; L-histidine from 5-phospho-alpha-D-ribose 1-diphosphate: step 4/9. The chain is 1-(5-phosphoribosyl)-5-[(5-phosphoribosylamino)methylideneamino] imidazole-4-carboxamide isomerase from Desulfitobacterium hafniense (strain DSM 10664 / DCB-2).